The chain runs to 343 residues: N-acetyl-gamma-glutamyl-phosphate reductase (343 aa).

The active site involves Cys-148.

Belongs to the NAGSA dehydrogenase family. Type 1 subfamily.

It localises to the cytoplasm. It catalyses the reaction N-acetyl-L-glutamate 5-semialdehyde + phosphate + NADP(+) = N-acetyl-L-glutamyl 5-phosphate + NADPH + H(+). It participates in amino-acid biosynthesis; L-arginine biosynthesis; N(2)-acetyl-L-ornithine from L-glutamate: step 3/4. Its function is as follows. Catalyzes the NADPH-dependent reduction of N-acetyl-5-glutamyl phosphate to yield N-acetyl-L-glutamate 5-semialdehyde. The sequence is that of N-acetyl-gamma-glutamyl-phosphate reductase from Caldicellulosiruptor bescii (strain ATCC BAA-1888 / DSM 6725 / KCTC 15123 / Z-1320) (Anaerocellum thermophilum).